We begin with the raw amino-acid sequence, 175 residues long: Large ribosomal subunit protein uL10 (175 aa).

This sequence belongs to the universal ribosomal protein uL10 family. As to quaternary structure, part of the ribosomal stalk of the 50S ribosomal subunit. The N-terminus interacts with L11 and the large rRNA to form the base of the stalk. The C-terminus forms an elongated spine to which L12 dimers bind in a sequential fashion forming a multimeric L10(L12)X complex.

Forms part of the ribosomal stalk, playing a central role in the interaction of the ribosome with GTP-bound translation factors. The sequence is that of Large ribosomal subunit protein uL10 from Psychrobacter cryohalolentis (strain ATCC BAA-1226 / DSM 17306 / VKM B-2378 / K5).